We begin with the raw amino-acid sequence, 247 residues long: Probable transcriptional regulatory protein BHWA1_01533 (247 aa).

Positions 1-22 are disordered; sequence MSGHSKWASIKHKKAANDSKKG.

This sequence belongs to the TACO1 family.

It is found in the cytoplasm. The sequence is that of Probable transcriptional regulatory protein BHWA1_01533 from Brachyspira hyodysenteriae (strain ATCC 49526 / WA1).